A 914-amino-acid polypeptide reads, in one-letter code: Probable UDP-N-acetylglucosamine--peptide N-acetylglucosaminyltransferase SPINDLY (914 aa).

Residues M1 to K39 are disordered. The segment covering G19–S37 has biased composition (low complexity). A Phosphoserine modification is found at S35. TPR repeat units lie at residues G43–N76, V77–N110, C112–Y144, A152–Y185, A186–Y219, A220–F253, A261–Y294, A295–C328, A329–F362, Q364–Y396, and A397–S430. A catalytic region region spans residues R431–S914. Residues P866–S914 form a disordered region. Polar residues predominate over residues V877 to A889. The span at P894 to S907 shows a compositional bias: low complexity.

This sequence belongs to the glycosyltransferase 41 family. O-GlcNAc transferase subfamily. In terms of assembly, homomultimer; via its TPR repeats. Interacts with GI. Interacts with TCP14 and TCP15. Interacts (via N-terminus) with APRR5. Interacts with CPN20. As to expression, widely expressed. Present throughout the plant (at protein level).

The protein resides in the cytoplasm. It localises to the nucleus. It catalyses the reaction L-seryl-[protein] + UDP-N-acetyl-alpha-D-glucosamine = 3-O-(N-acetyl-beta-D-glucosaminyl)-L-seryl-[protein] + UDP + H(+). The catalysed reaction is L-threonyl-[protein] + UDP-N-acetyl-alpha-D-glucosamine = 3-O-(N-acetyl-beta-D-glucosaminyl)-L-threonyl-[protein] + UDP + H(+). The enzyme catalyses L-seryl-[protein] + GDP-beta-L-fucose = 3-O-(alpha-L-fucosyl)-L-seryl-[protein] + GDP + H(+). It carries out the reaction L-threonyl-[protein] + GDP-beta-L-fucose = 3-O-(alpha-L-fucosyl)-L-threonyl-[protein] + GDP + H(+). Its pathway is protein modification; protein glycosylation. Probable O-linked N-acetylglucosamine transferase (OGT) involved in various processes such as gibberellin (GA) signaling pathway and circadian clock. OGTs catalyze the addition of nucleotide-activated sugars directly onto the polypeptide through O-glycosidic linkage with the hydroxyl of serine or threonine. Probably acts by adding O-linked sugars to yet unknown proteins. Acts as a repressor of GA signaling pathway to inhibit hypocotyl elongation. Functions with GIGANTEA (GI) in pathways controlling flowering, circadian cotyledon movements and hypocotyl elongation. Acts as a light-regulated promoter of elongation via its interaction with GI. Acts as an activator of cytokinin signaling. Required with SEC for gamete and seed development. Its OGT activity has been proved in vitro but not in vivo. Possesses O-fucosyltransferase activity on specific serine and threonine residues. Mediates O-fucosylation of the DELLA protein RGA, a repressor of the GA signaling pathway. O-fucosylation enhances RGA activity by promoting RGA binding to key transcription factors in brassinosteroid and light-signaling pathways. Regulates root hair patterning upstream of the transcription factor WER, independently of DELLA proteins and GA signaling. Involved in abscisic acid (ABA) signaling partly through functional ABAR. Mediates O-fucosylation of CPN20 that may depress ABA responses during seed germination and seedling development. Involved in the modulation of the pace of the circadian clock by mediating O-fucosylation of APRR5, one of the core circadian clock components. O-fucosylation promotes APRR5 proteolysis. The polypeptide is Probable UDP-N-acetylglucosamine--peptide N-acetylglucosaminyltransferase SPINDLY (Arabidopsis thaliana (Mouse-ear cress)).